Consider the following 1502-residue polypeptide: Rho GTPase-activating protein 5 (1502 aa).

FF domains are found at residues 267-325, 366-420, 427-481, and 482-548; these read QLVV…HIEQ, KLME…HVQH, RVEM…HQRE, and IVEK…HIGF. Position 550 is a 3'-nitrotyrosine (Tyr-550). A phosphoserine mark is found at Ser-590 and Ser-765. Residues 590–763 form the pG1 pseudoGTPase domain; the sequence is STNIDKVNLF…LESVKHNLDV (174 aa). A pG2 pseudoGTPase domain is found at 779–944; the sequence is RIVMCAMCGD…FSDVLEKKNM (166 aa). 2 positions are modified to phosphoserine: Ser-951 and Ser-968. Disordered regions lie at residues 975-1004, 1022-1050, and 1069-1089; these read YNNY…LPTP, HSTP…PKTN, and NPRK…DPSD. Pro residues predominate over residues 1036–1045; that stretch reads VPPPIKPKPV. A Phosphoserine modification is found at Ser-1115. Disordered stretches follow at residues 1125–1156 and 1168–1254; these read FVNN…YKYK and YRRT…TRRN. The segment covering 1140-1150 has biased composition (basic and acidic residues); it reads RTSKSHGERRP. 5 positions are modified to phosphoserine: Ser-1173, Ser-1176, Ser-1195, Ser-1202, and Ser-1218. In terms of domain architecture, Rho-GAP spans 1262-1449; that stretch reads MPLQDLVTAE…TFIQQCQFFF (188 aa).

In terms of assembly, may interact with RASA1/p120GAP. In terms of tissue distribution, detected in skin fibroblasts (at protein level).

The protein localises to the cytoplasm. It localises to the cell membrane. In terms of biological role, GTPase-activating protein for Rho family members. This chain is Rho GTPase-activating protein 5 (ARHGAP5), found in Homo sapiens (Human).